Here is a 292-residue protein sequence, read N- to C-terminus: Fat storage-inducing transmembrane protein 1 (292 aa).

Residues methionine 1–arginine 18 lie on the Lumenal side of the membrane. A helical transmembrane segment spans residues alanine 19–glycine 39. Residues serine 40–arginine 54 are Cytoplasmic-facing. A helical membrane pass occupies residues leucine 55–asparagine 75. The Lumenal portion of the chain corresponds to serine 76–serine 94. The helical transmembrane segment at alanine 95 to threonine 115 threads the bilayer. Topologically, residues arginine 116–alanine 141 are cytoplasmic. A helical transmembrane segment spans residues phenylalanine 142–leucine 162. Residues histidine 163–threonine 187 lie on the Lumenal side of the membrane. Histidine 186 is an active-site residue. Residues phenylalanine 188–leucine 208 form a helical membrane-spanning segment. Residues alanine 209–leucine 220 lie on the Cytoplasmic side of the membrane. Residues valine 221–isoleucine 241 traverse the membrane as a helical segment. Residues tyrosine 242 to lysine 249 lie on the Lumenal side of the membrane. The active site involves histidine 244. Residues valine 250–glutamine 270 form a helical membrane-spanning segment. Residues proline 271–asparagine 292 lie on the Cytoplasmic side of the membrane.

It belongs to the FIT family. FIT1 subfamily. As to expression, predominantly expressed in skeletal muscle and at lower levels in the heart (at protein level). In the heart, mRNA expression levels do not correlate well with protein levels, suggesting post-transcriptional regulation in this organ.

It localises to the endoplasmic reticulum membrane. Functionally, plays an important role in the formation of lipid droplets (LDs) which are storage organelles at the center of lipid and energy homeostasis. Directly binds to diacylglycerol (DAGs) and triacylglycerol. This chain is Fat storage-inducing transmembrane protein 1, found in Mus musculus (Mouse).